The sequence spans 801 residues: PR domain zinc finger protein 4 (801 aa).

Positions 412–529 (KQLVLRQSIV…PENELLFYYS (118 aa)) constitute an SET domain. The C2H2-type 1; atypical zinc finger occupies 545–566 (HLCNCGKECNSYTEFKAHLTSH). 4 C2H2-type zinc fingers span residues 618–640 (HKCD…LKIH), 646–668 (YRCT…MVIH), 674–696 (LKCD…VLIH), and 702–724 (IKCP…LNSH). A C2H2-type 6; atypical zinc finger spans residues 730–752 (YVCEKCTKAYLTKYHLTRHLKTC). The interval 751 to 782 (TCKGPTSSSSAPEEEEEDDSEEEDLADSVGTE) is disordered. Residues 762-776 (PEEEEEDDSEEEDLA) show a composition bias toward acidic residues.

The protein belongs to the class V-like SAM-binding methyltransferase superfamily. As to expression, expressed in many tissues. Highly expressed in ovary, testis, pancreas, brain, heart and prostate.

The protein localises to the nucleus. May function as a transcription factor involved in cell differentiation. The polypeptide is PR domain zinc finger protein 4 (PRDM4) (Homo sapiens (Human)).